Consider the following 471-residue polypeptide: Alkaline phosphatase (471 aa).

Residues 1 to 21 form the signal peptide; sequence MKQSTIALALLPLLFTPVTKA. Asp73 provides a ligand contact to Mg(2+). Asp73 is a binding site for Zn(2+). The active-site Phosphoserine intermediate is the Ser124. Mg(2+)-binding residues include Asp175 and Thr177. Cystine bridges form between Cys190-Cys200 and Cys308-Cys358. Glu344 contacts Mg(2+). 5 residues coordinate Zn(2+): Asp349, His353, Asp391, His392, and His434.

The protein belongs to the alkaline phosphatase family. As to quaternary structure, isozymes 1 and 3 are a dimer of identical chains, isozyme 2 is a dimer of heterogeneous chains, one of each of the subunits from isozymes 1 and 3. Mg(2+) serves as cofactor. The cofactor is Zn(2+).

Its subcellular location is the periplasm. It carries out the reaction a phosphate monoester + H2O = an alcohol + phosphate. This chain is Alkaline phosphatase (phoA), found in Escherichia coli (strain K12).